The following is a 232-amino-acid chain: 7-cyano-7-deazaguanine synthase (232 aa).

Residue 7 to 17 participates in ATP binding; it reads CSGGLDSVSLA. Cysteine 185, cysteine 193, cysteine 196, and cysteine 199 together coordinate Zn(2+).

The protein belongs to the QueC family. It depends on Zn(2+) as a cofactor.

It carries out the reaction 7-carboxy-7-deazaguanine + NH4(+) + ATP = 7-cyano-7-deazaguanine + ADP + phosphate + H2O + H(+). It participates in purine metabolism; 7-cyano-7-deazaguanine biosynthesis. In terms of biological role, catalyzes the ATP-dependent conversion of 7-carboxy-7-deazaguanine (CDG) to 7-cyano-7-deazaguanine (preQ(0)). In Chelativorans sp. (strain BNC1), this protein is 7-cyano-7-deazaguanine synthase.